Here is a 610-residue protein sequence, read N- to C-terminus: Elongation factor 4 (610 aa).

Residues 14–196 (NRIRNFSIIA…ALVANIPPPK (183 aa)) form the tr-type G domain. GTP is bound by residues 26–31 (DHGKST) and 143–146 (NKID).

This sequence belongs to the TRAFAC class translation factor GTPase superfamily. Classic translation factor GTPase family. LepA subfamily.

The protein localises to the cell inner membrane. It catalyses the reaction GTP + H2O = GDP + phosphate + H(+). In terms of biological role, required for accurate and efficient protein synthesis under certain stress conditions. May act as a fidelity factor of the translation reaction, by catalyzing a one-codon backward translocation of tRNAs on improperly translocated ribosomes. Back-translocation proceeds from a post-translocation (POST) complex to a pre-translocation (PRE) complex, thus giving elongation factor G a second chance to translocate the tRNAs correctly. Binds to ribosomes in a GTP-dependent manner. The protein is Elongation factor 4 of Legionella pneumophila (strain Paris).